The following is a 473-amino-acid chain: Argininosuccinate lyase (473 aa).

Belongs to the lyase 1 family. Argininosuccinate lyase subfamily.

The protein localises to the cytoplasm. It catalyses the reaction 2-(N(omega)-L-arginino)succinate = fumarate + L-arginine. It participates in amino-acid biosynthesis; L-arginine biosynthesis; L-arginine from L-ornithine and carbamoyl phosphate: step 3/3. The sequence is that of Argininosuccinate lyase from Mycobacteroides abscessus (strain ATCC 19977 / DSM 44196 / CCUG 20993 / CIP 104536 / JCM 13569 / NCTC 13031 / TMC 1543 / L948) (Mycobacterium abscessus).